The chain runs to 43 residues: Protein PsbN (43 aa).

A helical transmembrane segment spans residues 5 to 27 (TLVAIFISCSLVSFTGYALYTAF).

This sequence belongs to the PsbN family.

The protein localises to the plastid. It localises to the chloroplast thylakoid membrane. Functionally, may play a role in photosystem I and II biogenesis. The sequence is that of Protein PsbN from Exsertotheca crispa (Moss).